A 177-amino-acid chain; its full sequence is Austinoid biosynthesis clusters protein F (177 aa).

This sequence belongs to the trt14 isomerase family. Homodimer.

Its pathway is secondary metabolite biosynthesis; terpenoid biosynthesis. In terms of biological role, part of the gene cluster B that mediates the biosynthesis of austinol and dehydroaustinol, two fungal meroterpenoids. The first step of the pathway is the synthesis of 3,5-dimethylorsellinic acid by the polyketide synthase ausA. 3,5-dimethylorsellinic acid is then prenylated by the polyprenyl transferase ausN. Further epoxidation by the FAD-dependent monooxygenase ausM and cyclization by the probable terpene cyclase ausL lead to the formation of protoaustinoid A. Protoaustinoid A is then oxidized to spiro-lactone preaustinoid A3 by the combined action of the FAD-binding monooxygenases ausB and ausC, and the dioxygenase ausE. Acid-catalyzed keto-rearrangement and ring contraction of the tetraketide portion of preaustinoid A3 by ausJ lead to the formation of preaustinoid A4. The aldo-keto reductase ausK, with the help of ausH, is involved in the next step by transforming preaustinoid A4 into isoaustinone which is in turn hydroxylated by the P450 monooxygenase ausI to form austinolide. Finally, the cytochrome P450 monooxygenase ausG modifies austinolide to austinol. Austinol can be further modified to dehydroaustinol which forms a diffusible complex with diorcinol that initiates conidiation. Due to genetic rearrangements of the clusters and the subsequent loss of some enzymes, the end products of the Emericella nidulans austinoid biosynthesis clusters are austinol and dehydroaustinol, even if additional enzymes, such as the O-acetyltransferase ausQ and the cytochrome P450 monooxygenase ausR are still functional. The chain is Austinoid biosynthesis clusters protein F from Emericella nidulans (strain FGSC A4 / ATCC 38163 / CBS 112.46 / NRRL 194 / M139) (Aspergillus nidulans).